A 312-amino-acid chain; its full sequence is Molybdenum cofactor biosynthesis bifunctional protein (312 aa).

The interval 1 to 155 (MEFTHLDENG…GGKSSAAEYH (155 aa)) is molybdenum cofactor biosynthesis protein C. Substrate contacts are provided by residues 74 to 76 (LCH) and 110 to 111 (ME). Aspartate 125 is a catalytic residue. The segment at 156 to 312 (PRTAILVMSD…FPMLKGDGHA (157 aa)) is molybdenum cofactor biosynthesis protein B.

This sequence in the N-terminal section; belongs to the MoaC family. It in the C-terminal section; belongs to the MoaB/Mog family.

It catalyses the reaction (8S)-3',8-cyclo-7,8-dihydroguanosine 5'-triphosphate = cyclic pyranopterin phosphate + diphosphate. Its pathway is cofactor biosynthesis; molybdopterin biosynthesis. Catalyzes the conversion of (8S)-3',8-cyclo-7,8-dihydroguanosine 5'-triphosphate to cyclic pyranopterin monophosphate (cPMP). The protein is Molybdenum cofactor biosynthesis bifunctional protein (moaCB) of Chlorobaculum tepidum (strain ATCC 49652 / DSM 12025 / NBRC 103806 / TLS) (Chlorobium tepidum).